Here is a 366-residue protein sequence, read N- to C-terminus: S-adenosylmethionine:tRNA ribosyltransferase-isomerase (366 aa).

It belongs to the QueA family. Monomer.

Its subcellular location is the cytoplasm. The enzyme catalyses 7-aminomethyl-7-carbaguanosine(34) in tRNA + S-adenosyl-L-methionine = epoxyqueuosine(34) in tRNA + adenine + L-methionine + 2 H(+). It participates in tRNA modification; tRNA-queuosine biosynthesis. In terms of biological role, transfers and isomerizes the ribose moiety from AdoMet to the 7-aminomethyl group of 7-deazaguanine (preQ1-tRNA) to give epoxyqueuosine (oQ-tRNA). The chain is S-adenosylmethionine:tRNA ribosyltransferase-isomerase from Agrobacterium fabrum (strain C58 / ATCC 33970) (Agrobacterium tumefaciens (strain C58)).